Reading from the N-terminus, the 636-residue chain is Protein cueball (636 aa).

The N-terminal stretch at 1–27 (MKLCTSQQFGVAVLFIVLNICSPLADA) is a signal peptide. Residues 28-517 (SPIAWDFAVT…ADGPSSLRSG (490 aa)) are Extracellular-facing. N83 and N109 each carry an N-linked (GlcNAc...) asparagine glycan. LDL-receptor class B repeat units follow at residues 122 to 169 (RNLF…DICR), 170 to 214 (RQLY…DQLS), and 215 to 260 (DRIF…TEDT). N190 is a glycosylation site (N-linked (GlcNAc...) asparagine). 2 N-linked (GlcNAc...) asparagine glycosylation sites follow: N285 and N339. EGF-like domains are found at residues 350–384 (RMDA…ARCE) and 419–456 (EYYK…TRCE). 5 disulfides stabilise this stretch: C359–C372, C374–C383, C423–C433, C427–C444, and C446–C455. N-linked (GlcNAc...) asparagine glycans are attached at residues N449, N458, and N493. A helical transmembrane segment spans residues 518–538 (SVIIVLVVGIVSSLALVAVIV). The Cytoplasmic segment spans residues 539-636 (HGLRLIYKPK…IHNMEDDLLT (98 aa)).

Belongs to the cueball family.

The protein localises to the cell membrane. In terms of biological role, has a role in spermatogenesis and oogenesis. This Drosophila virilis (Fruit fly) protein is Protein cueball.